The following is a 465-amino-acid chain: Transcriptional protein swt1 (465 aa).

A PINc domain is found at Gly70–Ile190.

This sequence belongs to the SWT1 family.

It localises to the cytoplasm. It is found in the nucleus. Involved in transcription. This is Transcriptional protein swt1 from Schizosaccharomyces pombe (strain 972 / ATCC 24843) (Fission yeast).